The sequence spans 289 residues: Ribosomal protein L11 methyltransferase (289 aa).

Residues Thr142, Gly163, Asp185, and Asn226 each contribute to the S-adenosyl-L-methionine site.

This sequence belongs to the methyltransferase superfamily. PrmA family.

The protein localises to the cytoplasm. It catalyses the reaction L-lysyl-[protein] + 3 S-adenosyl-L-methionine = N(6),N(6),N(6)-trimethyl-L-lysyl-[protein] + 3 S-adenosyl-L-homocysteine + 3 H(+). Its function is as follows. Methylates ribosomal protein L11. The sequence is that of Ribosomal protein L11 methyltransferase from Legionella pneumophila (strain Lens).